A 152-amino-acid chain; its full sequence is Endoribonuclease YbeY (152 aa).

Positions 113, 117, and 123 each coordinate Zn(2+).

This sequence belongs to the endoribonuclease YbeY family. Zn(2+) is required as a cofactor.

The protein localises to the cytoplasm. Its function is as follows. Single strand-specific metallo-endoribonuclease involved in late-stage 70S ribosome quality control and in maturation of the 3' terminus of the 16S rRNA. This is Endoribonuclease YbeY from Acidovorax ebreus (strain TPSY) (Diaphorobacter sp. (strain TPSY)).